The following is a 738-amino-acid chain: Outer membrane protein assembly factor BamA (738 aa).

A signal peptide spans 1–13 (MVWLLFLSSFCFA). POTRA domains lie at 14 to 81 (DEVV…LQEN), 82 to 159 (PILR…VKEA), 162 to 248 (TVIR…LKEG), 251 to 329 (YSFG…VVST), and 332 to 404 (YRIR…VKER).

It belongs to the BamA family. In terms of assembly, part of the Bam complex.

Its subcellular location is the cell outer membrane. Its function is as follows. Part of the outer membrane protein assembly complex, which is involved in assembly and insertion of beta-barrel proteins into the outer membrane. This Neorickettsia risticii (strain Illinois) protein is Outer membrane protein assembly factor BamA.